Here is a 332-residue protein sequence, read N- to C-terminus: L-lactate dehydrogenase A chain (332 aa).

Residues 29-57 (GAVG…VEDK) and Arg-99 each bind NAD(+). Substrate is bound by residues Arg-106, Asn-138, and Arg-169. Position 138 (Asn-138) interacts with NAD(+). His-193 (proton acceptor) is an active-site residue. A substrate-binding site is contributed by Thr-248.

The protein belongs to the LDH/MDH superfamily. LDH family. As to quaternary structure, homotetramer.

The protein localises to the cytoplasm. The catalysed reaction is (S)-lactate + NAD(+) = pyruvate + NADH + H(+). It participates in fermentation; pyruvate fermentation to lactate; (S)-lactate from pyruvate: step 1/1. Its function is as follows. Interconverts simultaneously and stereospecifically pyruvate and lactate with concomitant interconversion of NADH and NAD(+). The chain is L-lactate dehydrogenase A chain (LDHA) from Caiman crocodilus apaporiensis (Rio Apaporis caiman).